A 118-amino-acid chain; its full sequence is Large ribosomal subunit protein bL20 (118 aa).

The protein belongs to the bacterial ribosomal protein bL20 family.

Functionally, binds directly to 23S ribosomal RNA and is necessary for the in vitro assembly process of the 50S ribosomal subunit. It is not involved in the protein synthesizing functions of that subunit. The sequence is that of Large ribosomal subunit protein bL20 from Staphylococcus aureus (strain Mu3 / ATCC 700698).